The primary structure comprises 790 residues: PAN2-PAN3 deadenylation complex subunit PAN3 (790 aa).

Disordered stretches follow at residues 166–191 (IAQQ…AVSA) and 235–259 (AMIS…ASPI). The span at 168 to 191 (QQQPQHPQKQQQHPPSVGGGAVSA) shows a compositional bias: low complexity. The segment at 369 to 655 (DAAEAAQHAL…SVTDLMPMIG (287 aa)) is pseudokinase domain. Residues R423, 472–479 (DYHPGSQT), and 552–553 (TK) contribute to the ATP site. Positions 656 to 694 (ARFYTQLDALQSKIDMQEDELAKEMENGRLYRILVKLNS) form a coiled coil. Residues 695–790 (INERPDFNLD…FSELMSSAAN (96 aa)) form a knob domain region.

This sequence belongs to the protein kinase superfamily. PAN3 family. Homodimer. Forms a heterotrimer with a catalytic subunit PAN2 to form the poly(A)-nuclease (PAN) deadenylation complex. Interacts (via PAM-2 motif) with poly(A)-binding protein (via PABC domain), conferring substrate specificity of the enzyme complex. Interacts with the GW182 family protein gw. Interacts with Gyf.

It localises to the cytoplasm. It is found in the P-body. In terms of biological role, regulatory subunit of the poly(A)-nuclease (PAN) deadenylation complex, one of two cytoplasmic mRNA deadenylases involved in general and miRNA-mediated mRNA turnover. PAN specifically shortens poly(A) tails of RNA and the activity is stimulated by poly(A)-binding protein (PABP). PAN deadenylation is followed by rapid degradation of the shortened mRNA tails by the CCR4-NOT complex. Deadenylated mRNAs are then degraded by two alternative mechanisms, namely exosome-mediated 3'-5' exonucleolytic degradation, or deadenylation-dependent mRNA decaping and subsequent 5'-3' exonucleolytic degradation by XRN1. PAN3 acts as a positive regulator for PAN activity, recruiting the catalytic subunit PAN2 to mRNA via its interaction with RNA and PABP, and to miRNA targets via its interaction with GW182 family proteins. In Drosophila melanogaster (Fruit fly), this protein is PAN2-PAN3 deadenylation complex subunit PAN3.